The sequence spans 283 residues: Ribosomal RNA small subunit methyltransferase H (283 aa).

S-adenosyl-L-methionine-binding positions include 31-33, Asp-50, Phe-77, Asp-93, and Gln-100; that span reads GGH.

It belongs to the methyltransferase superfamily. RsmH family.

It localises to the cytoplasm. The enzyme catalyses cytidine(1402) in 16S rRNA + S-adenosyl-L-methionine = N(4)-methylcytidine(1402) in 16S rRNA + S-adenosyl-L-homocysteine + H(+). Its function is as follows. Specifically methylates the N4 position of cytidine in position 1402 (C1402) of 16S rRNA. The polypeptide is Ribosomal RNA small subunit methyltransferase H (Trichodesmium erythraeum (strain IMS101)).